The sequence spans 395 residues: Argininosuccinate synthase (395 aa).

ATP is bound by residues 6 to 14 (AYSGGLDTS) and A33. Y84 contacts L-citrulline. G114 contributes to the ATP binding site. T116, N120, and D121 together coordinate L-aspartate. Residue N120 participates in L-citrulline binding. The L-citrulline site is built by R124, S173, S182, E258, and Y270.

This sequence belongs to the argininosuccinate synthase family. Type 1 subfamily. As to quaternary structure, homotetramer.

It localises to the cytoplasm. The enzyme catalyses L-citrulline + L-aspartate + ATP = 2-(N(omega)-L-arginino)succinate + AMP + diphosphate + H(+). Its pathway is amino-acid biosynthesis; L-arginine biosynthesis; L-arginine from L-ornithine and carbamoyl phosphate: step 2/3. The protein is Argininosuccinate synthase of Rhodococcoides fascians (Rhodococcus fascians).